The sequence spans 401 residues: Mannan endo-1,4-beta-mannosidase 3 (401 aa).

A signal peptide spans 1–24 (MSYTHRRSCISGLFLLLLALSCEA). Substrate-binding residues include W84 and N198. E199 serves as the catalytic Proton donor. Y277 contributes to the substrate binding site. Residue E317 is the Nucleophile of the active site. W356 contributes to the substrate binding site.

The protein belongs to the glycosyl hydrolase 5 (cellulase A) family.

It is found in the secreted. It catalyses the reaction Random hydrolysis of (1-&gt;4)-beta-D-mannosidic linkages in mannans, galactomannans and glucomannans.. This chain is Mannan endo-1,4-beta-mannosidase 3 (MAN3), found in Solanum lycopersicum (Tomato).